A 156-amino-acid polypeptide reads, in one-letter code: Hexachlorocyclohexane dehydrochlorinase 2 (156 aa).

Residue Asp25 is part of the active site. His73 (proton acceptor) is an active-site residue.

The protein belongs to the HCH dehydrochlorinase family. Homotrimer.

The protein resides in the periplasm. The catalysed reaction is gamma-hexachlorocyclohexane = (3R,4S,5S,6R)-pentachlorocyclohexene + chloride + H(+). It carries out the reaction (3R,4S,5S,6R)-pentachlorocyclohexene = (3R,6R)-1,3,4,6-tetrachlorocyclohexa-1,4-diene + chloride + H(+). It functions in the pathway xenobiotic degradation; hexachlorocyclohexane degradation. Catalyzes the conversion of the important environmental pollutant gamma-hexachlorocyclohexane (gamma-HCH or lindane) to 1,3,4,6-tetrachloro-1,4-cyclohexadiene (1,4-TCDN) via gamma-pentachlorocyclohexene (gamma-PCCH). Proceeds by two successive 1,2-anti conformationally dependent dehydrochlorinations. Also shows activity with alpha- and delta-HCH, giving alpha- and delta-PCCH respectively, but not with the beta isomer. The chain is Hexachlorocyclohexane dehydrochlorinase 2 from Sphingobium indicum (strain DSM 16412 / CCM 7286 / MTCC 6364 / B90A).